A 254-amino-acid chain; its full sequence is tRNA (guanine-N(1)-)-methyltransferase (254 aa).

Residues Gly113 and 133-138 each bind S-adenosyl-L-methionine; that span reads IGDYVL.

It belongs to the RNA methyltransferase TrmD family. In terms of assembly, homodimer.

It is found in the cytoplasm. It catalyses the reaction guanosine(37) in tRNA + S-adenosyl-L-methionine = N(1)-methylguanosine(37) in tRNA + S-adenosyl-L-homocysteine + H(+). Functionally, specifically methylates guanosine-37 in various tRNAs. This Edwardsiella ictaluri (strain 93-146) protein is tRNA (guanine-N(1)-)-methyltransferase.